We begin with the raw amino-acid sequence, 195 residues long: DnaJ homolog subfamily C member 5 (195 aa).

Residues 13 to 82 (GDSLYIVLGL…RNIYDKYGSL (70 aa)) form the J domain. Residues 162 to 195 (DMEKEGDGAIVVQPTSATETTQLTSDSHPSYHTE) are disordered. Positions 174–189 (QPTSATETTQLTSDSH) are enriched in polar residues.

Palmitoylated. Palmitoylation occurs probably in the cysteine-rich domain and regulates DNAJC5 stable membrane attachment.

It is found in the cytoplasm. It localises to the cytosol. The protein localises to the membrane. Its subcellular location is the cytoplasmic vesicle. The protein resides in the secretory vesicle. It is found in the chromaffin granule membrane. It localises to the melanosome. The protein localises to the cell membrane. May have an important role in presynaptic function. May be involved in calcium-dependent neurotransmitter release at nerve endings. The polypeptide is DnaJ homolog subfamily C member 5 (Tetronarce californica (Pacific electric ray)).